We begin with the raw amino-acid sequence, 256 residues long: ATP synthase peripheral stalk subunit b, mitochondrial (256 aa).

The transit peptide at 1–42 (MLSRVVLSAAAAAAPSLKNAALLGPGVLQATRIFHTGQPSLA) directs the protein to the mitochondrion. Position 131 is an N6-succinyllysine (Lys131). Residues Lys139, Lys154, Lys162, Lys221, Lys233, and Lys244 each carry the N6-acetyllysine modification.

The protein belongs to the eukaryotic ATPase B chain family. As to quaternary structure, component of the ATP synthase complex composed at least of ATP5F1A/subunit alpha, ATP5F1B/subunit beta, ATP5MC1/subunit c (homooctomer), MT-ATP6/subunit a, MT-ATP8/subunit 8, ATP5ME/subunit e, ATP5MF/subunit f, ATP5MG/subunit g, ATP5MK/subunit k, ATP5MJ/subunit j, ATP5F1C/subunit gamma, ATP5F1D/subunit delta, ATP5F1E/subunit epsilon, ATP5PF/subunit F6, ATP5PB/subunit b, ATP5PD/subunit d, ATP5PO/subunit OSCP. ATP synthase complex consists of a soluble F(1) head domain (subunits alpha(3) and beta(3)) - the catalytic core - and a membrane F(0) domain - the membrane proton channel (subunits c, a, 8, e, f, g, k and j). These two domains are linked by a central stalk (subunits gamma, delta, and epsilon) rotating inside the F1 region and a stationary peripheral stalk (subunits F6, b, d, and OSCP).

The protein resides in the mitochondrion. Its subcellular location is the mitochondrion inner membrane. In terms of biological role, subunit b, of the mitochondrial membrane ATP synthase complex (F(1)F(0) ATP synthase or Complex V) that produces ATP from ADP in the presence of a proton gradient across the membrane which is generated by electron transport complexes of the respiratory chain. ATP synthase complex consist of a soluble F(1) head domain - the catalytic core - and a membrane F(1) domain - the membrane proton channel. These two domains are linked by a central stalk rotating inside the F(1) region and a stationary peripheral stalk. During catalysis, ATP synthesis in the catalytic domain of F(1) is coupled via a rotary mechanism of the central stalk subunits to proton translocation. In vivo, can only synthesize ATP although its ATP hydrolase activity can be activated artificially in vitro. Part of the complex F(0) domain. Part of the complex F(0) domain and the peripheric stalk, which acts as a stator to hold the catalytic alpha(3)beta(3) subcomplex and subunit a/ATP6 static relative to the rotary elements. This is ATP synthase peripheral stalk subunit b, mitochondrial from Bos taurus (Bovine).